The primary structure comprises 470 residues: Uronate isomerase (470 aa).

Belongs to the metallo-dependent hydrolases superfamily. Uronate isomerase family.

The enzyme catalyses D-glucuronate = D-fructuronate. It carries out the reaction aldehydo-D-galacturonate = keto-D-tagaturonate. It functions in the pathway carbohydrate metabolism; pentose and glucuronate interconversion. The protein is Uronate isomerase of Vibrio vulnificus (strain YJ016).